A 662-amino-acid chain; its full sequence is Putative cysteine-rich receptor-like protein kinase 16 (662 aa).

Positions 1–26 (MIFIMKLKNLLPIFCFFLVSFSISSA) are cleaved as a signal peptide. Gnk2-homologous domains lie at 27–131 (QKCG…NRSF) and 137–244 (MTPF…LYQF). The Extracellular portion of the chain corresponds to 27-277 (QKCGKTGLFK…DDGGKISTRN (251 aa)). N-linked (GlcNAc...) asparagine glycans are attached at residues Asn55, Asn64, Asn106, Asn128, Asn145, Asn152, and Asn206. Residues 278–298 (ILGITVALAFFITVLLVLGYA) traverse the membrane as a helical segment. Residues 299-662 (LSRRRKAYQE…DASITSVDLR (364 aa)) lie on the Cytoplasmic side of the membrane. One can recognise a Protein kinase domain in the interval 335 to 612 (FQKSNKLGHG…VFQMLTNTFL (278 aa)). ATP contacts are provided by residues 341–349 (LGHGGFGEV) and Lys363. Asp460 serves as the catalytic Proton acceptor.

The protein belongs to the protein kinase superfamily. Ser/Thr protein kinase family. CRK subfamily.

Its subcellular location is the membrane. The catalysed reaction is L-seryl-[protein] + ATP = O-phospho-L-seryl-[protein] + ADP + H(+). It catalyses the reaction L-threonyl-[protein] + ATP = O-phospho-L-threonyl-[protein] + ADP + H(+). The chain is Putative cysteine-rich receptor-like protein kinase 16 (CRK16) from Arabidopsis thaliana (Mouse-ear cress).